The sequence spans 152 residues: Probable flagellum biosynthesis repressor protein FlbT (152 aa).

The protein belongs to the FlbT family.

Has a post-transcriptional repressor function in flagellum biogenesis. Associates with the 5'-UTR of fljK mRNA and promotes its degradation. The protein is Probable flagellum biosynthesis repressor protein FlbT of Brucella anthropi (strain ATCC 49188 / DSM 6882 / CCUG 24695 / JCM 21032 / LMG 3331 / NBRC 15819 / NCTC 12168 / Alc 37) (Ochrobactrum anthropi).